Reading from the N-terminus, the 142-residue chain is NTF2-related export protein 2 (142 aa).

The 120-residue stretch at 17–136 folds into the NTF2 domain; sequence AAEEFVNIYY…WKIASDCFRF (120 aa).

In terms of assembly, associates with NXF1, NXF2, NXF3 and NXF5.

Its subcellular location is the nucleus. The protein resides in the cytoplasm. Regulator of protein export for NES-containing proteins. Also plays a role in mRNA nuclear export. The protein is NTF2-related export protein 2 of Homo sapiens (Human).